A 150-amino-acid polypeptide reads, in one-letter code: Protein-export protein SecB (150 aa).

It belongs to the SecB family. In terms of assembly, homotetramer, a dimer of dimers. One homotetramer interacts with 1 SecA dimer.

The protein resides in the cytoplasm. In terms of biological role, one of the proteins required for the normal export of preproteins out of the cell cytoplasm. It is a molecular chaperone that binds to a subset of precursor proteins, maintaining them in a translocation-competent state. It also specifically binds to its receptor SecA. This is Protein-export protein SecB from Polaromonas sp. (strain JS666 / ATCC BAA-500).